The sequence spans 355 residues: Cyanide hydratase (355 aa).

The CN hydrolase domain occupies 6 to 286 (YKAAAVTSEP…GLLFVDIDLN (281 aa)). Glu-46 acts as the Proton acceptor in catalysis. The active site involves Lys-128. The active-site Nucleophile is the Cys-163.

The protein belongs to the carbon-nitrogen hydrolase superfamily. Nitrilase family. In terms of assembly, oligomer of dimers, forming left-handed helical fibers.

The enzyme catalyses formamide = hydrogen cyanide + H2O. Its function is as follows. Catalyzes the hydration of cyanide to formamide. Degradation of cyanide may be important for plant pathogenic fungi in infection of cyanogenic plants. Also has low but significant nitrilase activity with acetonitrile, propionitrile and benzonitrile. In Gibberella baccata (Fusarium lateritium), this protein is Cyanide hydratase.